Reading from the N-terminus, the 338-residue chain is Beta-ketoacyl-[acyl-carrier-protein] synthase III (338 aa).

Active-site residues include Cys-119 and His-261. The ACP-binding stretch occupies residues 262–266; it reads QANQR. Residue Asn-291 is part of the active site.

This sequence belongs to the thiolase-like superfamily. FabH family. As to quaternary structure, homodimer.

It localises to the cytoplasm. It carries out the reaction malonyl-[ACP] + acetyl-CoA + H(+) = 3-oxobutanoyl-[ACP] + CO2 + CoA. It functions in the pathway lipid metabolism; fatty acid biosynthesis. In terms of biological role, catalyzes the condensation reaction of fatty acid synthesis by the addition to an acyl acceptor of two carbons from malonyl-ACP. Catalyzes the first condensation reaction which initiates fatty acid synthesis and may therefore play a role in governing the total rate of fatty acid production. Possesses both acetoacetyl-ACP synthase and acetyl transacylase activities. Its substrate specificity determines the biosynthesis of branched-chain and/or straight-chain of fatty acids. This chain is Beta-ketoacyl-[acyl-carrier-protein] synthase III, found in Prochlorococcus marinus (strain SARG / CCMP1375 / SS120).